A 439-amino-acid polypeptide reads, in one-letter code: Ribosomal protein uS12 methylthiotransferase RimO (439 aa).

Residues 5-115 (PKIGFVSLGC…LIEAVHTHAP (111 aa)) form the MTTase N-terminal domain. Residues Cys-14, Cys-50, Cys-79, Cys-146, Cys-150, and Cys-153 each contribute to the [4Fe-4S] cluster site. Positions 132–369 (LTPRHYSYLK…MGLQAQISAD (238 aa)) constitute a Radical SAM core domain. A TRAM domain is found at 372–439 (QRFVGTEQQV…ESTEYDLIAD (68 aa)).

The protein belongs to the methylthiotransferase family. RimO subfamily. [4Fe-4S] cluster is required as a cofactor.

Its subcellular location is the cytoplasm. It carries out the reaction L-aspartate(89)-[ribosomal protein uS12]-hydrogen + (sulfur carrier)-SH + AH2 + 2 S-adenosyl-L-methionine = 3-methylsulfanyl-L-aspartate(89)-[ribosomal protein uS12]-hydrogen + (sulfur carrier)-H + 5'-deoxyadenosine + L-methionine + A + S-adenosyl-L-homocysteine + 2 H(+). Catalyzes the methylthiolation of an aspartic acid residue of ribosomal protein uS12. The protein is Ribosomal protein uS12 methylthiotransferase RimO of Francisella philomiragia subsp. philomiragia (strain ATCC 25017 / CCUG 19701 / FSC 153 / O#319-036).